The sequence spans 151 residues: Small ribosomal subunit protein uS15 (151 aa).

It belongs to the universal ribosomal protein uS15 family.

The sequence is that of Small ribosomal subunit protein uS15 (RpS13) from Choristoneura parallela (Spotted fireworm moth).